The chain runs to 189 residues: Batroxicidin (189 aa).

Positions 1-22 (MQGFFWKTWLVVALCGTSSSLA) are cleaved as a signal peptide. Residues 23–155 (HRPLSYGEAL…DEEKDRPKRV (133 aa)) constitute a propeptide that is removed on maturation. Intrachain disulfides connect Cys-79-Cys-90 and Cys-101-Cys-118. A compositionally biased stretch (acidic residues) spans 125-148 (EEEEEDEEEQKAEVEKDEEKEDEE). The disordered stretch occupies residues 125–152 (EEEEEDEEEQKAEVEKDEEKEDEEKDRP).

Belongs to the cathelicidin family. As to expression, expressed by the venom gland.

It localises to the secreted. The protein resides in the target cell membrane. Its function is as follows. Potent antimicrobial peptide against Gram-negative (MIC=0.25 ug/ml against E.coli ATCC 25922, MIC=1 ug/ml against P.aeruginosa) and Gram-positive bacteria (MIC=32 ug/ml against E.faecalis, MIC=32 ug/ml against S.aureus). Adopts an amphipathic alpha helical conformation, that may allow to partition into the target membrane. Low hemolytic activities have been observed on mammalian cells. In addition, when tested in vitro on the parasite Trypanosoma cruzi (responsible of the Chagas disease), is able to reduce the number of the three forms (epimastigote, trypomastigote and amastigote) by inducing cell death through necrosis. This is Batroxicidin from Bothrops atrox (Barba amarilla).